Reading from the N-terminus, the 557-residue chain is Kelch repeat and BTB domain-containing protein 2 (557 aa).

The BTB domain maps to 26-95 (CDVIITIRDG…LYNRHISSMN (70 aa)). The BACK domain maps to 143–223 (IVKYIKRMLM…CIDIQNLDKK (81 aa)). Kelch repeat units lie at residues 305–352 (EIII…VIDD), 353–399 (TIYA…VLDQ), and 415–464 (SVHA…SHED).

Interacts (via BTB domain) with host CUL3.

The protein resides in the host cytoplasm. Functionally, probable substrate-specific adapter of CUL3-containing E3 ubiquitin-protein ligases which mediate the ubiquitination and subsequent proteasomal degradation of host target proteins. The polypeptide is Kelch repeat and BTB domain-containing protein 2 (KBTB2) (Cowpox virus (strain Brighton Red) (CPV)).